The sequence spans 343 residues: Heat-inducible transcription repressor HrcA (343 aa).

It belongs to the HrcA family.

Negative regulator of class I heat shock genes (grpE-dnaK-dnaJ and groELS operons). Prevents heat-shock induction of these operons. The sequence is that of Heat-inducible transcription repressor HrcA from Clostridium botulinum (strain Alaska E43 / Type E3).